Reading from the N-terminus, the 241-residue chain is Small ribosomal subunit protein bS6 (241 aa).

Positions 97–108 (KPKIRERNRKYT) are enriched in basic residues. The tract at residues 97–241 (KPKIRERNRK…YNNKKPQSSN (145 aa)) is disordered. Over residues 109–118 (LRRDRFDKPN) the composition is skewed to basic and acidic residues. 2 stretches are compositionally biased toward low complexity: residues 130–151 (QDQQATKNQQNFQQNQQNQASQ) and 161–182 (DDFQQVSSNQQNFGQNQQNQSG). Residues 183-193 (YHRENNRHNQE) show a composition bias toward basic and acidic residues. The span at 194–210 (NMHQNNKNHQNQTSQTQ) shows a compositional bias: low complexity.

This sequence belongs to the bacterial ribosomal protein bS6 family.

Its function is as follows. Binds together with bS18 to 16S ribosomal RNA. The protein is Small ribosomal subunit protein bS6 of Mesomycoplasma hyopneumoniae (strain J / ATCC 25934 / NCTC 10110) (Mycoplasma hyopneumoniae).